We begin with the raw amino-acid sequence, 271 residues long: Chitinase 6 (271 aa).

An N-terminal signal peptide occupies residues 1–20 (MARRLSLLAVVLAMVAAVSA). Residues 25–60 (AQSCGCASDQCCSKWGFCGTGSDYCGTGCQAGPCDV) form the Chitin-binding type-1 domain. 6 disulfide bridges follow: Cys28/Cys36, Cys30/Cys42, Cys35/Cys49, Cys88/Cys137, Cys150/Cys159, and Cys239/Cys271. The Proton donor role is filled by Glu132. The N-linked (GlcNAc...) asparagine glycan is linked to Asn268.

Belongs to the glycosyl hydrolase 19 family. Chitinase class IV subfamily. Expressed in roots, leaves, sheaths and meristems.

The enzyme catalyses Random endo-hydrolysis of N-acetyl-beta-D-glucosaminide (1-&gt;4)-beta-linkages in chitin and chitodextrins.. May function in reproductive organs during embryogenesis and seed maturation. This Oryza sativa subsp. japonica (Rice) protein is Chitinase 6 (Cht6).